Reading from the N-terminus, the 368-residue chain is DNA-dependent metalloprotease dvc-1 (368 aa).

Positions 21-190 constitute a SprT-like domain; sequence HALFIQFDAR…QSCGGNFLKV (170 aa). A Zn(2+)-binding site is contributed by His-89. The active site involves Glu-90. 2 residues coordinate Zn(2+): His-93 and His-108. The tract at residues 187–309 is disordered; that stretch reads FLKVKEPEGY…PVNFTSPSSA (123 aa). The span at 226–237 shows a compositional bias: basic and acidic residues; it reads TLDDFFKKDGKN. The span at 238 to 274 shows a compositional bias: low complexity; the sequence is SSDNSTSKSPTKPSTSLFTGSGQKLGGSSSTSSLLNS. Residues 344–368 form a UBZ4-type zinc finger; the sequence is SVICPSCNTEVMENLIHGHLDYCLG. 4 residues coordinate Zn(2+): Cys-347, Cys-350, His-362, and Cys-366.

It belongs to the Spartan family. In terms of assembly, interacts with vcp/p97 (cdc-48.1 or cdc-48.2).

The protein localises to the nucleus. It localises to the chromosome. DNA-dependent metalloendopeptidase that mediates the proteolytic cleavage of covalent DNA-protein cross-links (DPCs) during DNA synthesis, thereby playing a key role in maintaining genomic integrity. DPCs are highly toxic DNA lesions that interfere with essential chromatin transactions, such as replication and transcription, and which are induced by reactive agents, such as UV light or formaldehyde. Associates with the DNA replication machinery and specifically removes DPCs during DNA synthesis. Regulator of UV-induced DNA damage response: required to protect genome stability during DNA replication, possibly via recruitment of vcp/p97 (cdc-48.1 or cdc-48.2) recruitment. In Caenorhabditis elegans, this protein is DNA-dependent metalloprotease dvc-1.